The primary structure comprises 394 residues: Elongation factor Tu (394 aa).

Residues 10 to 204 (KPHVNVGTIG…AMDDYIPAPE (195 aa)) form the tr-type G domain. Positions 19–26 (GHVDHGKT) are G1. 19–26 (GHVDHGKT) contacts GTP. Thr26 provides a ligand contact to Mg(2+). A G2 region spans residues 60–64 (GITIN). Positions 81 to 84 (DCPG) are G3. Residues 81–85 (DCPGH) and 136–139 (NKCD) contribute to the GTP site. Residues 136-139 (NKCD) are G4. Residues 174–176 (SAL) form a G5 region.

The protein belongs to the TRAFAC class translation factor GTPase superfamily. Classic translation factor GTPase family. EF-Tu/EF-1A subfamily. Monomer.

It localises to the cytoplasm. The enzyme catalyses GTP + H2O = GDP + phosphate + H(+). GTP hydrolase that promotes the GTP-dependent binding of aminoacyl-tRNA to the A-site of ribosomes during protein biosynthesis. In Francisella tularensis subsp. tularensis (strain FSC 198), this protein is Elongation factor Tu.